The primary structure comprises 312 residues: MARKVEKENGSGPIKSNHDLVRGVWQLFRLHTIEGLSTASIGWLALFFYATQQQLAFDLVRNAFIGIFATYQMTHCVFCLWNDICDRDFDGKVARTRDRPLPSGMVTLTEAMWVFVLGVFASMGVTYWLLGADVTLTMVPIWVLSFIYPLCKRIIWAPQVVLGLTMALCVLPPWVAVRKNSGSAGLLPASLFGAIFCWLVYLDLIYASQDRPDDQKAGVKSLAIFLGDYLKAGLTVLGVLQVVCFVLAASEASAGFLLWVFGIAVWSASVPWSIMSLDTRDRKSGGRIFLVNAILGIYMAAVSGLNVSLAMW.

The N-linked (GlcNAc...) asparagine glycan is linked to asparagine 9. Helical transmembrane passes span 30–50, 64–84, 111–131, 132–152, 154–174, 185–205, 229–249, 255–275, and 288–308; these read LHTIEGLSTASIGWLALFFYA, FIGIFATYQMTHCVFCLWNDI, AMWVFVLGVFASMGVTYWLLG, ADVTLTMVPIWVLSFIYPLCK, IIWAPQVVLGLTMALCVLPPW, GLLPASLFGAIFCWLVYLDLI, YLKAGLTVLGVLQVVCFVLAA, GFLLWVFGIAVWSASVPWSIM, and IFLVNAILGIYMAAVSGLNVS.

It belongs to the UbiA prenyltransferase family. Mg(2+) serves as cofactor.

It localises to the membrane. It functions in the pathway secondary metabolite biosynthesis; terpenoid biosynthesis. In terms of biological role, polyprenyl transferase; part of the gene cluster that mediates the biosynthesis of the meroterpenoids arthripenoids. The pathway begins with the HR-PKS atnH that catalyzes two chain-extension steps to form a reduced triketide, which then primes the SAT domain in the NR-PKS atnG to initiate three more cycles of extension to give a linear hexaketide corresponding to the polyketide part of arthripenoids. The FAD-dependent monooxygenase atnJ then performs an oxidative decarboxylation at C11 of the atnH/atnG product, via an electrophilic aromatic hydroxylation with concomitant ipso-decarboxylation. The membrane-bound polyprenyl transferase atnF then introduces a farnesyl group before the FAD-dependent monooxygenase atnK functions as the first epoxidase on terminal C12'-C13' olefin, followed by a second epoxidation on C7'-C8' catalyzed by atnA. The terpene cyclase/mutase atnI then initiates the sequential tricyclic ring formation through protonation of the terminal epoxide and catalyzes the regioselective and stereoselective 6/6/6-tricyclic ring formation. The cytochrome P450 monooxygenase atnM is responsible for hydroxylating both C1' and C10'. The next steps may involve ketoreduction and acetyl transfer by the ketoreductase atnB and the acetyltransferase atnC, and lead to the production of arthripenoid B, the final biosynthetic product of the atn cluster. The hydroquinone moiety in arthripenoid B is prone to undergo spontaneous oxidation to afford a benzoquinone compound, a key intermediate for generating structure diversity. For instance, addition of a cysteine followed by ring contraction gives arthripenoid A, tautomerization gives the main product arthripenoid C, addition of a molecular of water or amine affords arthripenoid D or E, respectively, and loss of one water forms arthripenoid F. The protein is Polyprenyl transferase atnF of Arthrinium sp.